The following is a 488-amino-acid chain: Protein unzipped (488 aa).

The N-terminal stretch at 1 to 21 (MTSNSCLISLGLLLVLIQILA) is a signal peptide. Residues 22 to 465 (PAKAAEHSVF…DVALAGFGVN (444 aa)) lie on the Extracellular side of the membrane. Residues asparagine 35, asparagine 232, asparagine 317, and asparagine 374 are each glycosylated (N-linked (GlcNAc...) asparagine). Over residues 380–400 (TTTTTTTTSTSTTTHATTTST) the composition is skewed to low complexity. The tract at residues 380 to 453 (TTTTTTTTST…EAPENMSSDP (74 aa)) is disordered. N-linked (GlcNAc...) asparagine glycosylation occurs at asparagine 448. A helical membrane pass occupies residues 466 to 486 (AAGSTFIAGSALLTLLLTIFL). Topologically, residues 487-488 (SL) are cytoplasmic.

Its subcellular location is the membrane. In terms of biological role, required for normal axon patterning during neurogenesis. This Drosophila melanogaster (Fruit fly) protein is Protein unzipped (uzip).